We begin with the raw amino-acid sequence, 1082 residues long: Putative white-brown complex homolog protein 30 (1082 aa).

2 helical membrane-spanning segments follow: residues 12–32 and 292–312; these read HIFL…SLDG and NIHA…IMVY. The segment covering 329–348 has biased composition (basic and acidic residues); sequence SREAAARHAKETTQARERWK. The tract at residues 329–437 is disordered; it reads SREAAARHAK…QAPKGKQLHT (109 aa). The ABC transporter domain maps to 484–726; that stretch reads VAFKDLTLTL…FADIGITVPD (243 aa). 518–525 contacts ATP; it reads GPSGAGKT. An ABC transmembrane type-2 domain is found at 832-1029; that stretch reads RQYRYFVGRV…TLEAFVLSNA (198 aa). Transmembrane regions (helical) follow at residues 853–873, 877–897, 958–978, 979–999, and 1054–1074; these read ALDF…AKVN, IDTL…KISA, YIVL…FAIL, YSPS…TLIA, and WILC…IAYF.

The protein belongs to the ABC transporter superfamily. ABCG family. Eye pigment precursor importer (TC 3.A.1.204) subfamily.

It is found in the membrane. In Arabidopsis thaliana (Mouse-ear cress), this protein is Putative white-brown complex homolog protein 30 (WBC30).